We begin with the raw amino-acid sequence, 109 residues long: MVKLKVRKGDEVIVITGKHKGKKGKILKVFPEDSKVIVAGVNLVKKHTKPNQMSGGGIITKELPIHISNIAHIDPKTGDPTKVAFKCLDDGSKVRVAKKSGEIIGKVGK.

This sequence belongs to the universal ribosomal protein uL24 family. In terms of assembly, part of the 50S ribosomal subunit.

One of two assembly initiator proteins, it binds directly to the 5'-end of the 23S rRNA, where it nucleates assembly of the 50S subunit. In terms of biological role, one of the proteins that surrounds the polypeptide exit tunnel on the outside of the subunit. This is Large ribosomal subunit protein uL24 from Rickettsia akari (strain Hartford).